The sequence spans 1006 residues: MAVTISTNAFVNASLLDESRNSFWRPLFHQPYYNCRRVVRLNSRKLNSKVMFCLNLNTKEVGLQKPGDKGFEFKPSFDQYLQIMESVKTARKKKKFDRLKVEEDDGGGGNGDSVYEVKDMKIKSGELKDETFRKRYSRQEIVSDKRNERVFKRNGEIENHRVATDLKWSKSGESSVALKLSKSGESSVTVPEDESFRKRYSKQEYHRSSDTSRGIERGSRGDELDLVVEERRVQRIAKDARWSKSRESSVAVKWSNSGESSVTMPKDESFRRRYSKQEHHRSSDTSRGIARGSKGDELELVVEERRVQRIAKDVRWSKSDESLVPVSEDESFRRGNPKQEMVRYQRVSDTSRGIERGSKGDGLDLLAEERRIERLANERHEIRSSKLSGTRRIGAKRNDDDDDSLFAMETPAFRFSDESSDIVDKPATSRVEMEDRIEKLAKVLNGADINMPEWQFSKAIRSAKIRYTDYTVMRLIHFLGKLGNWRRVLQVIEWLQRQDRYKSNKIRIIYTTALNVLGKSRRPVEALNVFHAMLLQISSYPDMVAYRSIAVTLGQAGHIKELFYVIDTMRSPPKKKFKPTTLEKWDPRLEPDVVVYNAVLNACVQRKQWEGAFWVLQQLKQRGQKPSPVTYGLIMEVMLACEKYNLVHEFFRKMQKSSIPNALAYRVLVNTLWKEGKSDEAVHTVEDMESRGIVGSAALYYDLARCLCSAGRCNEGLNMVNFVNPVVLKLIENLIYKADLVHTIQFQLKKICRVANKPLVVTYTGLIQACVDSGNIKNAAYIFDQMKKVCSPNLVTCNIMLKAYLQGGLFEEARELFQKMSEDGNHIKNSSDFESRVLPDTYTFNTMLDTCAEQEKWDDFGYAYREMLRHGYHFNAKRHLRMVLEASRAGKEEVMEATWEHMRRSNRIPPSPLIKERFFRKLEKGDHISAISSLADLNGKIEETELRAFSTSAWSRVLSRFEQDSVLRLMDDVNRRLGSRSESSDSVLGNLLSSCKDYLKTRTHNL.

A chloroplast-targeting transit peptide spans 1–40 (MAVTISTNAFVNASLLDESRNSFWRPLFHQPYYNCRRVVR). Disordered regions lie at residues 180-219 (LSKSGESSVTVPEDESFRKRYSKQEYHRSSDTSRGIERGS) and 248-292 (SSVA…IARG). Over residues 194 to 219 (ESFRKRYSKQEYHRSSDTSRGIERGS) the composition is skewed to basic and acidic residues. A compositionally biased stretch (polar residues) spans 254-263 (WSNSGESSVT). Over residues 265-284 (PKDESFRRRYSKQEHHRSSD) the composition is skewed to basic and acidic residues. PPR repeat units lie at residues 468–502 (TDYTVMRLIHFLGKLGNWRRVLQVIEWLQRQDRYK), 506–536 (IRIIYTTALNVLGKSRRPVEALNVFHAMLLQ), 542–572 (DMVAYRSIAVTLGQAGHIKELFYVIDTMRSP), 592–626 (DVVVYNAVLNACVQRKQWEGAFWVLQQLKQRGQKP), 627–657 (SPVTYGLIMEVMLACEKYNLVHEFFRKMQKS), 661–695 (NALAYRVLVNTLWKEGKSDEAVHTVEDMESRGIVG), 759–789 (LVVTYTGLIQACVDSGNIKNAAYIFDQMKKV), 793–827 (NLVTCNIMLKAYLQGGLFEEARELFQKMSEDGNHI), 840–874 (DTYTFNTMLDTCAEQEKWDDFGYAYREMLRHGYHF), and 875–909 (NAKRHLRMVLEASRAGKEEVMEATWEHMRRSNRIP).

This sequence belongs to the PPR family. P subfamily.

It localises to the plastid. It is found in the chloroplast. In terms of biological role, may play a role in embryogenesis. The protein is Pentatricopeptide repeat-containing protein At1g30610, chloroplastic (EMB2279) of Arabidopsis thaliana (Mouse-ear cress).